Reading from the N-terminus, the 1255-residue chain is Cilia- and flagella-associated protein 337 B (1255 aa).

In terms of domain architecture, EF-hand spans 87–122 (KLVRCLTNLFEEIDLNGNGILEWDEFTNYVIEKATV). Residues Asp100, Asn102, Asn104, and Glu111 each contribute to the Ca(2+) site. WD repeat units lie at residues 228–269 (DLKT…WVLA), 282–322 (EFKN…KELE), 326–365 (AHTEVIMDMITMPKLQFLASGALDGLLILWDTINNKKKRV), 368–407 (EHTRGITSLSFNEALILLFSAGFDHEVCVWNPYIDNLIYK), 410–449 (GHSSPLLGVKVIEGTSQVITLDSDGNVRVTDIKKFSNVQC), 496–536 (VDDY…KIFS), 538–577 (VTQGEITCFTLDSLKKRMLIGDSMGQIGIYNTYNGAMIKA), 580–624 (KHSA…RTLE), 625–664 (LKDVMITSLGFDPITKMIIVATNTGITSFYESDTGKQNGS), 669–708 (TQYEEITSLNLIKNLPYIITTTTNGKINFIALPPLLFKFQ), 769–808 (QQNLSISNCIYCDQTKCLFLSDDKGFIKCFDISQILTILE), and 844–883 (AHYEMIKSLEYIQEENLLITTAYDKKVKLWDSKTGNLIDQ). Disordered regions lie at residues 941–988 (IKSL…NFNP) and 1140–1160 (QQQVQNQQTEPSSNRSHQQPG). Over residues 953–969 (TQESSTQEQEAAQQPQQ) the composition is skewed to low complexity. Polar residues predominate over residues 1148–1160 (TEPSSNRSHQQPG).

The protein belongs to the CFAP337 family. Associates with components of the nexin-dynein regulatory complex (N-DRC) and the CFAP184:CFAP263 complex.

The protein resides in the cell projection. It is found in the cilium. In terms of biological role, associates with components of the nexin-dynein regulatory complex (N-DRC), a key regulator of ciliary/flagellar motility, and might act as an inner dynein arm (IDA) hub or linkage. The protein is Cilia- and flagella-associated protein 337 B of Tetrahymena thermophila (strain SB210).